The primary structure comprises 129 residues: Large ribosomal subunit protein mL53 (129 aa).

The transit peptide at 1-50 directs the protein to the mitochondrion; the sequence is MREKLNLLAKLKSVVYKFDPLNPNTRSIRSFIPLTTCKRSRQLAPECSIS.

This sequence belongs to the mitochondrion-specific ribosomal protein mL53 family.

The protein resides in the mitochondrion. The sequence is that of Large ribosomal subunit protein mL53 (mrpl53) from Dictyostelium discoideum (Social amoeba).